Reading from the N-terminus, the 641-residue chain is Fructose-1,6-bisphosphatase class 3 (641 aa).

The protein belongs to the FBPase class 3 family. Requires Mn(2+) as cofactor.

The enzyme catalyses beta-D-fructose 1,6-bisphosphate + H2O = beta-D-fructose 6-phosphate + phosphate. The protein operates within carbohydrate biosynthesis; gluconeogenesis. The polypeptide is Fructose-1,6-bisphosphatase class 3 (Latilactobacillus sakei subsp. sakei (strain 23K) (Lactobacillus sakei subsp. sakei)).